Reading from the N-terminus, the 258-residue chain is Snake venom serine protease PA (258 aa).

The N-terminal stretch at 1–18 (MVLIRVLANLLILQLSYA) is a signal peptide. Positions 19–24 (QKSPEL) are excised as a propeptide. The Peptidase S1 domain maps to 25–249 (VVGGDECNIN…YNDWIKSIIA (225 aa)). Disulfide bonds link Cys-31-Cys-163, Cys-50-Cys-66, Cys-98-Cys-256, Cys-142-Cys-210, Cys-174-Cys-189, and Cys-200-Cys-225. The N-linked (GlcNAc...) asparagine glycan is linked to Asn-44. Catalysis depends on charge relay system residues His-65 and Asp-110. Ser-204 functions as the Charge relay system in the catalytic mechanism.

The protein belongs to the peptidase S1 family. Snake venom subfamily. Monomer. In terms of tissue distribution, expressed by the venom gland.

It is found in the secreted. Functionally, snake venom serine protease that may act in the hemostasis system of the prey. This is Snake venom serine protease PA from Trimeresurus stejnegeri (Chinese green tree viper).